The sequence spans 86 residues: DNA-directed RNA polymerase subunit omega (86 aa).

A compositionally biased stretch (basic and acidic residues) spans 67 to 76 (SAREHAKESQ). The interval 67–86 (SAREHAKESQVSEEEVREES) is disordered. The segment covering 77-86 (VSEEEVREES) has biased composition (acidic residues).

The protein belongs to the RNA polymerase subunit omega family. As to quaternary structure, the RNAP catalytic core consists of 2 alpha, 1 beta, 1 beta' and 1 omega subunit. When a sigma factor is associated with the core the holoenzyme is formed, which can initiate transcription.

The catalysed reaction is RNA(n) + a ribonucleoside 5'-triphosphate = RNA(n+1) + diphosphate. Functionally, promotes RNA polymerase assembly. Latches the N- and C-terminal regions of the beta' subunit thereby facilitating its interaction with the beta and alpha subunits. This chain is DNA-directed RNA polymerase subunit omega, found in Nitrosococcus oceani (strain ATCC 19707 / BCRC 17464 / JCM 30415 / NCIMB 11848 / C-107).